Here is a 209-residue protein sequence, read N- to C-terminus: C-type lectin domain family 6 member A (209 aa).

Topologically, residues 1–20 (MMQEQQPQSTEKRGWLSLRL) are cytoplasmic. Residues 21–41 (WSVAGISIALLSACFIVSCVV) traverse the membrane as a helical; Signal-anchor for type II membrane protein segment. Over 42–209 (TYHFTYGETG…SICEMNKIYL (168 aa)) the chain is Extracellular. Disulfide bonds link Cys66-Cys78, Cys79-Cys90, Cys107-Cys202, and Cys176-Cys194. Residues 86–203 (FGSSCYFISS…CETRRNSICE (118 aa)) enclose the C-type lectin domain. Residues Val116, Asn118, and Glu122 each contribute to the Ca(2+) site. The N-linked (GlcNAc...) asparagine glycan is linked to Asn131. Ca(2+) contacts are provided by Glu168, Asn170, and Glu174. Alpha-D-mannopyranose-binding positions include 168-170 (EPN), Glu174, Trp182, 190-191 (ND), and Arg198. Asn170 carries N-linked (GlcNAc...) asparagine glycosylation. Residues Asn190 and Asp191 each contribute to the Ca(2+) site. Glu203 lines the Ca(2+) pocket.

In terms of assembly, associated with FCER1G. Heterodimer with CLEC4D; this heterodimer forms a pattern recognition receptor (PRR) against fungal infection. As to expression, expressed in lung, spleen, lymph node, leukocytes, bone marrow, tonsils and dendritic cells. Strongly expressed in purified monocytes and weakly in B-cells. In peripheral blood cells, preferentially expressed in plasmacytoids rather than myeloids.

The protein localises to the cell membrane. Its function is as follows. Calcium-dependent lectin that acts as a pattern recognition receptor (PRR) of the innate immune system: specifically recognizes and binds alpha-mannans on C.albicans hypheas. Binding of C.albicans alpha-mannans to this receptor complex leads to phosphorylation of the immunoreceptor tyrosine-based activation motif (ITAM) of FCER1G, triggering activation of SYK, CARD9 and NF-kappa-B, consequently driving maturation of antigen-presenting cells and shaping antigen-specific priming of T-cells toward effector T-helper 1 and T-helper 17 cell subtypes. Recognizes also, in a mannose-dependent manner, allergens from house dust mite and fungi, by promoting cysteinyl leukotriene production. Recognizes soluble elements from the eggs of Shistosoma mansoni altering adaptive immune responses. The polypeptide is C-type lectin domain family 6 member A (Homo sapiens (Human)).